A 509-amino-acid polypeptide reads, in one-letter code: Coiled-coil domain-containing protein 181 (509 aa).

The segment covering 46 to 82 has biased composition (basic and acidic residues); it reads ENINQDLKENETVMEHTKRHSDPDKSLQDEVSPRRND. Disordered stretches follow at residues 46-120 and 241-367; these read ENIN…EEED and PINN…EEKE. Composition is skewed to polar residues over residues 243–266 and 300–334; these read NNAN…SVSG and TCPS…STYC. Residues 335 to 375 are a coiled coil; the sequence is LSPRQKELQKQLEEKREKLKREEERRKIEEEKEKKRENDIV. A compositionally biased stretch (basic and acidic residues) spans 338–367; the sequence is RQKELQKQLEEKREKLKREEERRKIEEEKE.

This sequence belongs to the CCDC181 family. Homodimer. Interacts with HOOK1. Interacts with HOOK2. Interacts with HOOK3.

It localises to the cytoplasm. It is found in the cytoskeleton. Its subcellular location is the cell projection. The protein resides in the cilium. The protein localises to the flagellum. Microtubule-binding protein that localizes to the microtubular manchette of elongating spermatids. In Homo sapiens (Human), this protein is Coiled-coil domain-containing protein 181.